A 471-amino-acid chain; its full sequence is Putative multidrug resistance protein MdtD (471 aa).

Topologically, residues 1–11 (MTELPDSTRWQ) are periplasmic. The chain crosses the membrane as a helical span at residues 12-32 (LWIVAFGFFMQSLDTTIVNTA). Residues 33–48 (LPSMAQSLGESPLHMH) lie on the Cytoplasmic side of the membrane. A helical transmembrane segment spans residues 49–69 (MVIVSYVLTVAVMLPASGWLA). Over 70 to 76 (DKVGVRN) the chain is Periplasmic. The chain crosses the membrane as a helical span at residues 77–97 (IFFTAIVLFTLGSLFCALSGT). The Cytoplasmic portion of the chain corresponds to 98–101 (LNEL). Residues 102-124 (LLARALQGVGGAMMVPVGRLTVM) form a helical membrane-spanning segment. Topologically, residues 125–137 (KIVPREQYMAAMT) are periplasmic. The helical transmembrane segment at 138-158 (FVTLPGQVGPLLGPALGGLLV) threads the bilayer. At 159–164 (EYASWH) the chain is on the cytoplasmic side. A helical membrane pass occupies residues 165-185 (WIFLINIPVGIIGAIATLLLM). Residues 186–196 (PNYTMQTRRFD) are Periplasmic-facing. The chain crosses the membrane as a helical span at residues 197–217 (LSGFLLLAVGMAVLTLALDGS). The Cytoplasmic segment spans residues 218–224 (KGTGLSP). The helical transmembrane segment at 225 to 245 (LAIAGLVAVGVVALVLYLLHA) threads the bilayer. Over 246 to 262 (RNNNRALFSLKLFRTRT) the chain is Periplasmic. The chain crosses the membrane as a helical span at residues 263–283 (FSLGLAGSFAGRIGSGMLPFM). Residues 284-285 (TP) lie on the Cytoplasmic side of the membrane. Residues 286-306 (VFLQIGLGFSPFHAGLMMIPM) traverse the membrane as a helical segment. Over 307–341 (VLGSMGMKRIVVQVVNRFGYRRVLVATTLGLSLIT) the chain is Periplasmic. The helical transmembrane segment at 342-362 (LLFMTTALLGWYYVLPFVLFL) threads the bilayer. Residues 363 to 395 (QGMVNSTRFSSMNTLTLKDLPDNLASSGNSLLS) are Cytoplasmic-facing. A helical transmembrane segment spans residues 396–416 (MIMQLSMSIGVTIAGLLLGLF). The Periplasmic portion of the chain corresponds to 417-430 (GSQHVSVDSGTTQT). The chain crosses the membrane as a helical span at residues 431 to 451 (VFMYTWLSMAFIIALPAFIFA). Residues 452–471 (RVPNDTHQNVAISRRKRSAQ) are Cytoplasmic-facing.

Belongs to the major facilitator superfamily. TCR/Tet family.

The protein resides in the cell inner membrane. The polypeptide is Putative multidrug resistance protein MdtD (Shigella sonnei (strain Ss046)).